Here is a 299-residue protein sequence, read N- to C-terminus: S-methyl-5'-thioadenosine phosphorylase (299 aa).

Residues Ser14, 56 to 57 (RH), and 89 to 90 (SA) contribute to the phosphate site. Met191 contacts substrate. Thr192 serves as a coordination point for phosphate. Substrate is bound at residue 215 to 217 (DYD).

The protein belongs to the PNP/MTAP phosphorylase family. MTAP subfamily. In terms of assembly, homohexamer. Dimer of a homotrimer.

The catalysed reaction is S-methyl-5'-thioadenosine + phosphate = 5-(methylsulfanyl)-alpha-D-ribose 1-phosphate + adenine. The protein operates within amino-acid biosynthesis; L-methionine biosynthesis via salvage pathway; S-methyl-5-thio-alpha-D-ribose 1-phosphate from S-methyl-5'-thioadenosine (phosphorylase route): step 1/1. Its function is as follows. Catalyzes the reversible phosphorylation of S-methyl-5'-thioadenosine (MTA) to adenine and 5-methylthioribose-1-phosphate. Involved in the breakdown of MTA, a major by-product of polyamine biosynthesis. Responsible for the first step in the methionine salvage pathway after MTA has been generated from S-adenosylmethionine. Has broad substrate specificity with 6-aminopurine nucleosides as preferred substrates. The chain is S-methyl-5'-thioadenosine phosphorylase from Gloeobacter violaceus (strain ATCC 29082 / PCC 7421).